The following is a 509-amino-acid chain: Butyrophilin-like protein 1 (509 aa).

The signal sequence occupies residues 1–27 (MMKGSPSVPPAGCLLPLLLLLFTGVSG). 2 Ig-like V-type domains span residues 28–139 (EVSW…QEVS) and 151–237 (PLVH…KAIL). Topologically, residues 28–250 (EVSWFSVKGP…PFFPKTCPWK (223 aa)) are extracellular. 2 cysteine pairs are disulfide-bonded: Cys53–Cys127 and Cys167–Cys221. The helical transmembrane segment at 251–271 (VALVCSVLILLVLLGGISLGI) threads the bilayer. Topologically, residues 272 to 509 (WKEHQVKRRE…SMGLSATAQP (238 aa)) are cytoplasmic. The 194-residue stretch at 316–509 (RKALYKEDWK…SMGLSATAQP (194 aa)) folds into the B30.2/SPRY domain. Positions 349-372 (MPDQDKTDSRTEENRGEETVSSSQ) are disordered. Over residues 351–366 (DQDKTDSRTEENRGEE) the composition is skewed to basic and acidic residues.

It belongs to the immunoglobulin superfamily. BTN/MOG family.

The protein resides in the membrane. This is Butyrophilin-like protein 1 (Btnl1) from Mus musculus (Mouse).